The sequence spans 94 residues: uncharacterized protein (94 aa).

Expressed in heart.

This is an uncharacterized protein from Homo sapiens (Human).